The chain runs to 147 residues: Gastrula-specific protein 17 (147 aa).

Positions 1-119 are disordered; it reads MSQNLDFLAL…TQVYGNHQPG (119 aa). 3 stretches are compositionally biased toward polar residues: residues 20 to 36, 45 to 57, and 74 to 88; these read SPTSRHPSPKVWNSTPP, RQISPTPDQYTNP, and LLQNQRQSWGLSPTA.

The chain is Gastrula-specific protein 17 (gs17) from Xenopus laevis (African clawed frog).